The chain runs to 340 residues: Protein-arginine kinase (340 aa).

The region spanning 21–242 is the Phosphagen kinase C-terminal domain; it reads VVLSSRIRLA…EQIIMQERVA (222 aa). Residues 24-28, H79, R113, 164-168, and 195-200 contribute to the ATP site; these read SSRIR, RASVM, and RGIYGE.

This sequence belongs to the ATP:guanido phosphotransferase family.

The enzyme catalyses L-arginyl-[protein] + ATP = N(omega)-phospho-L-arginyl-[protein] + ADP + H(+). Its function is as follows. Catalyzes the specific phosphorylation of arginine residues in proteins. The sequence is that of Protein-arginine kinase from Listeria welshimeri serovar 6b (strain ATCC 35897 / DSM 20650 / CCUG 15529 / CIP 8149 / NCTC 11857 / SLCC 5334 / V8).